Consider the following 801-residue polypeptide: Fibroblast growth factor receptor 3 (801 aa).

The N-terminal stretch at 1–20 (MVVPACVLVFCVAVVAGATS) is a signal peptide. Residues 21–369 (EPPGPEQRVV…TDEAGSVYAG (349 aa)) are Extracellular-facing. Residues 22 to 124 (PPGPEQRVVR…VLCHFSVRVT (103 aa)) enclose the Ig-like C2-type 1 domain. Cysteines 59 and 107 form a disulfide. N96 carries N-linked (GlcNAc...) asparagine glycosylation. The disordered stretch occupies residues 125–146 (DAPSSGDDEDGEDVAEDTGAPY). The span at 130–140 (GDDEDGEDVAE) shows a compositional bias: acidic residues. 2 consecutive Ig-like C2-type domains span residues 145–238 (PYWT…YTLD) and 247–349 (PILQ…AWLV). The cysteines at positions 170 and 222 are disulfide-linked. 5 N-linked (GlcNAc...) asparagine glycosylation sites follow: N219, N256, N288, N309, and N322. C269 and C333 are oxidised to a cystine. A helical membrane pass occupies residues 370–390 (VLSYGVVFFLFILVVAAVILC). Residues 391–801 (RLRSPPKKGL…GPPSNGGPRT (411 aa)) are Cytoplasmic-facing. Phosphoserine is present on residues S438 and S439. In terms of domain architecture, Protein kinase spans 466–756 (LTLGKPLGEG…LTVTSTDEYL (291 aa)). Residues 472–480 (LGEGCFGQV) and K502 contribute to the ATP site. Catalysis depends on D611, which acts as the Proton acceptor. Residues Y641, Y642, Y719, and Y755 each carry the phosphotyrosine; by autocatalysis modification. Residues 762–801 (FEQYSPGGQDTPSSSSSGDDSVFTHDLLPPGPPSNGGPRT) are disordered. The span at 766–782 (SPGGQDTPSSSSSGDDS) shows a compositional bias: low complexity. The span at 790–801 (PPGPPSNGGPRT) shows a compositional bias: pro residues.

The protein belongs to the protein kinase superfamily. Tyr protein kinase family. Fibroblast growth factor receptor subfamily. Monomer. Homodimer after ligand binding. Interacts with FGF1, FGF2, FGF4, FGF6; FGF8, FGF9, FGF10, FGF17, FGF18, FGF19, FGF20 and FGF23 (in vitro). Interacts with KLB. Affinity for fibroblast growth factors (FGFs) is increased by heparan sulfate glycosaminoglycans that function as coreceptors. Likewise, KLB increases the affinity for FGF19 and FGF21. Interacts with PIK3R1, PLCG1, SOCS1 and SOCS3. Post-translationally, autophosphorylated. Binding of FGF family members together with heparan sulfate proteoglycan or heparin promotes receptor dimerization and autophosphorylation on tyrosine residues. Autophosphorylation occurs in trans between the two FGFR molecules present in the dimer. Phosphorylation at Tyr-719 is essential for stimulation of cell proliferation and activation of PIK3R1, STAT1 and MAP kinase signaling. Phosphorylation at Tyr-755 is required for interaction with PIK3R1 and PLCG1. Ubiquitinated. Is rapidly ubiquitinated after ligand binding and autophosphorylation, leading to receptor internalization and degradation. Subject to both proteasomal and lysosomal degradation. In terms of processing, N-glycosylated in the endoplasmic reticulum. The N-glycan chains undergo further maturation to an Endo H-resistant form in the Golgi apparatus. As to expression, in embryo, expressed in heart, lung, kidney, skin, head and liver but not in muscle. In adult, highest levels in brain. Also expressed in liver, lung, kidney, testis, ovary and uterus. Very low levels in heart, thymus, spleen and muscle.

The protein resides in the cell membrane. Its subcellular location is the cytoplasmic vesicle. The protein localises to the endoplasmic reticulum. The catalysed reaction is L-tyrosyl-[protein] + ATP = O-phospho-L-tyrosyl-[protein] + ADP + H(+). Its activity is regulated as follows. Present in an inactive conformation in the absence of bound ligand. Ligand binding leads to dimerization and activation by autophosphorylation on tyrosine residues. Functionally, tyrosine-protein kinase that acts as a cell-surface receptor for fibroblast growth factors and plays an essential role in the regulation of cell proliferation, differentiation and apoptosis. Plays an essential role in the regulation of chondrocyte differentiation, proliferation and apoptosis, and is required for normal skeleton development. Regulates both osteogenesis and postnatal bone mineralization by osteoblasts. Promotes apoptosis in chondrocytes, but can also promote cancer cell proliferation. Required for normal development of the inner ear. Phosphorylates PLCG1, CBL and FRS2. Ligand binding leads to the activation of several signaling cascades. Activation of PLCG1 leads to the production of the cellular signaling molecules diacylglycerol and inositol 1,4,5-trisphosphate. Phosphorylation of FRS2 triggers recruitment of GRB2, GAB1, PIK3R1 and SOS1, and mediates activation of RAS, MAPK1/ERK2, MAPK3/ERK1 and the MAP kinase signaling pathway, as well as of the AKT1 signaling pathway. Plays a role in the regulation of vitamin D metabolism. Mutations that lead to constitutive kinase activation or impair normal FGFR3 maturation, internalization and degradation lead to aberrant signaling. Over-expressed or constitutively activated FGFR3 promotes activation of STAT1, STAT5A and STAT5B. Plays a role in postnatal lung development. The sequence is that of Fibroblast growth factor receptor 3 (Fgfr3) from Mus musculus (Mouse).